The sequence spans 373 residues: tRNA N6-adenosine threonylcarbamoyltransferase (373 aa).

Residues histidine 133, histidine 137, and tyrosine 154 each coordinate a divalent metal cation. Substrate contacts are provided by residues tyrosine 154–glycine 158, aspartate 186, glycine 201, glutamate 205, and asparagine 302. Aspartate 331 contributes to the a divalent metal cation binding site.

The protein belongs to the KAE1 / TsaD family. Component of the EKC/KEOPS complex composed of at least BUD32, CGI121, GON7, KAE1 and PCC1; the whole complex dimerizes. Requires a divalent metal cation as cofactor.

Its subcellular location is the cytoplasm. The protein resides in the nucleus. It carries out the reaction L-threonylcarbamoyladenylate + adenosine(37) in tRNA = N(6)-L-threonylcarbamoyladenosine(37) in tRNA + AMP + H(+). In terms of biological role, component of the EKC/KEOPS complex that is required for the formation of a threonylcarbamoyl group on adenosine at position 37 (t(6)A37) in tRNAs that read codons beginning with adenine. The complex is probably involved in the transfer of the threonylcarbamoyl moiety of threonylcarbamoyl-AMP (TC-AMP) to the N6 group of A37. KAE1 likely plays a direct catalytic role in this reaction, but requires other protein(s) of the complex to fulfill this activity. The EKC/KEOPS complex also promotes both telomere uncapping and telomere elongation. The complex is required for efficient recruitment of transcriptional coactivators. The chain is tRNA N6-adenosine threonylcarbamoyltransferase from Debaryomyces hansenii (strain ATCC 36239 / CBS 767 / BCRC 21394 / JCM 1990 / NBRC 0083 / IGC 2968) (Yeast).